The chain runs to 187 residues: GTP cyclohydrolase 1 (187 aa).

The Zn(2+) site is built by Cys-78, His-81, and Cys-149.

This sequence belongs to the GTP cyclohydrolase I family. In terms of assembly, toroid-shaped homodecamer, composed of two pentamers of five dimers.

The enzyme catalyses GTP + H2O = 7,8-dihydroneopterin 3'-triphosphate + formate + H(+). Its pathway is cofactor biosynthesis; 7,8-dihydroneopterin triphosphate biosynthesis; 7,8-dihydroneopterin triphosphate from GTP: step 1/1. The protein is GTP cyclohydrolase 1 of Wolinella succinogenes (strain ATCC 29543 / DSM 1740 / CCUG 13145 / JCM 31913 / LMG 7466 / NCTC 11488 / FDC 602W) (Vibrio succinogenes).